The chain runs to 457 residues: Transcription termination factor Rho (457 aa).

Residues 1 to 23 (MNTTNKQLTEELNNTESNNDHND) are disordered. A Rho RNA-BD domain is found at 77-152 (LIVGEGVLEV…LKVNRVNFED (76 aa)). Residues 200-205 (GKGQRA), 212-217 (RTGKTV), and R243 contribute to the ATP site.

Belongs to the Rho family. In terms of assembly, homohexamer. The homohexamer assembles into an open ring structure.

Functionally, facilitates transcription termination by a mechanism that involves Rho binding to the nascent RNA, activation of Rho's RNA-dependent ATPase activity, and release of the mRNA from the DNA template. In Rickettsia prowazekii (strain Madrid E), this protein is Transcription termination factor Rho.